The chain runs to 208 residues: Large ribosomal subunit protein uL3 (208 aa).

Glutamine 149 carries the post-translational modification N5-methylglutamine.

It belongs to the universal ribosomal protein uL3 family. In terms of assembly, part of the 50S ribosomal subunit. Forms a cluster with proteins L14 and L19. In terms of processing, methylated by PrmB.

One of the primary rRNA binding proteins, it binds directly near the 3'-end of the 23S rRNA, where it nucleates assembly of the 50S subunit. This is Large ribosomal subunit protein uL3 from Haemophilus ducreyi (strain 35000HP / ATCC 700724).